The chain runs to 800 residues: Mitogen-activated protein kinase kinase kinase 20 (800 aa).

The residue at position 2 (S2) is an N-acetylserine. Residues S2, S3, and S7 each carry the phosphoserine; by autocatalysis modification. In terms of domain architecture, Protein kinase spans 16–277 (LQFFENCGGG…SLPDKCNSFL (262 aa)). ATP contacts are provided by residues 22–30 (CGGGSFGSV) and K45. The Proton acceptor role is filled by D133. At T161 the chain carries Phosphothreonine; by autocatalysis. The residue at position 165 (S165) is a Phosphoserine; by autocatalysis. S275 is subject to Phosphoserine. The interval 287 to 308 (IEATLERLKKLERDLSFKEQEL) is leucine-zipper. Position 302 is a phosphoserine; by autocatalysis (S302). Residues W339, E429, K434, D454, and S567 each carry the phosphoserine modification. One can recognise an SAM domain in the interval 339–410 (WTEDDVYCWV…KSAIEKLTHD (72 aa)). T586 bears the Phosphothreonine; by autocatalysis mark. S587 carries the post-translational modification Phosphoserine; by autocatalysis. A phosphoserine mark is found at S593 and S599. T628 is subject to Phosphothreonine. Phosphoserine occurs at positions 633, 637, and 648. A phosphoserine; by autocatalysis mark is found at S649 and S660. Positions 652–666 (LNSRDSGFSSGNTDT) are enriched in polar residues. Positions 652-800 (LNSRDSGFSS…RGDHRGWRNF (149 aa)) are disordered. Phosphothreonine; by autocatalysis is present on T664. Positions 667-678 (SSERGRYSDRSR) are enriched in basic and acidic residues. Positions 670–713 (RGRYSDRSRNKYGRGSISLNSSPRGRYSGKSQHSTPSRGRYPGK) are sensing domain (S). S685 carries the phosphoserine modification. 2 stretches are compositionally biased toward polar residues: residues 686 to 706 (ISLNSSPRGRYSGKSQHSTPS) and 717 to 726 (VSQSALNPHQ). Phosphoserine; by autocatalysis is present on residues S718 and S720. S727 and S733 each carry phosphoserine. The segment covering 728-738 (PDFKRSPRDLH) has biased composition (basic and acidic residues). Position 742 is a phosphothreonine; by autocatalysis (T742). Basic and acidic residues-rich tracts occupy residues 750-763 (PETDSRASEEDSKV) and 785-800 (TNKERARGDHRGWRNF). The tract at residues 774-800 (RKKPHRPSPAKTNKERARGDHRGWRNF) is C-terminal domain (CTD).

The protein belongs to the protein kinase superfamily. STE Ser/Thr protein kinase family. MAP kinase kinase kinase subfamily. As to quaternary structure, homodimer. Interacts with ZNF33A. Component of a signaling complex containing at least AKAP13, PKN1, MAPK14, MAP3K20 and MAP2K3. Within this complex, AKAP13 interacts directly with PKN1, which in turn recruits MAPK14, MAP2K3 and MAP3K20. Interacts with EIF2AK4/GCN2; promoting EIF2AK4/GCN2 kinase activity. Interacts with isoform ZAKbeta. In terms of assembly, interacts with isoform ZAKalpha. It depends on Mg(2+) as a cofactor. Activated by phosphorylation by PKN1, followed by autophosphorylation on Thr-161 and Ser-165. Autophosphorylation in response to ribotoxic stress promotes dissociation from colliding ribosomes and activation. In terms of tissue distribution, ubiquitously expressed. Isoform ZAKbeta is the predominant form in all tissues examined, except for liver, in which isoform ZAKalpha is more highly expressed.

The protein localises to the cytoplasm. It is found in the nucleus. The catalysed reaction is L-seryl-[protein] + ATP = O-phospho-L-seryl-[protein] + ADP + H(+). It catalyses the reaction L-threonyl-[protein] + ATP = O-phospho-L-threonyl-[protein] + ADP + H(+). Its activity is regulated as follows. Activated in response to stress, such as ribosomal stress, osmotic shock and ionizing radiation. Activated by phosphorylation by PKN1, followed by autophosphorylation on Thr-161 and Ser-165. Inhibited by nilotinib, sorafenib, dabrafenib, rebastinib and vemurafenib. Selectively inhibited by N-(3)-((1H-Pyrazolo[3,4-b]pyridin-5-yl)ethynyl)benzenesulfonamide compound 3h. Selectively inhibited by 1,2,3-triazole benzenesulfonamides. Stress-activated component of a protein kinase signal transduction cascade that promotes programmed cell death in response to various stress, such as ribosomal stress, osmotic shock and ionizing radiation. Acts by catalyzing phosphorylation of MAP kinase kinases, leading to activation of the JNK (MAPK8/JNK1, MAPK9/JNK2 and/or MAPK10/JNK3) and MAP kinase p38 (MAPK11, MAPK12, MAPK13 and/or MAPK14) pathways. Activates JNK through phosphorylation of MAP2K4/MKK4 and MAP2K7/MKK7, and MAP kinase p38 gamma (MAPK12) via phosphorylation of MAP2K3/MKK3 and MAP2K6/MKK6. Involved in stress associated with adrenergic stimulation: contributes to cardiac decompensation during periods of acute cardiac stress. May be involved in regulation of S and G2 cell cycle checkpoint by mediating phosphorylation of CHEK2. Its function is as follows. Key component of the stress-activated protein kinase signaling cascade in response to ribotoxic stress or UV-B irradiation. Acts as the proximal sensor of ribosome collisions during the ribotoxic stress response (RSR): directly binds to the ribosome by inserting its flexible C-terminus into the ribosomal intersubunit space, thereby acting as a sentinel for colliding ribosomes. Upon ribosome collisions, activates either the stress-activated protein kinase signal transduction cascade or the integrated stress response (ISR), leading to programmed cell death or cell survival, respectively. Dangerous levels of ribosome collisions trigger the autophosphorylation and activation of MAP3K20, which dissociates from colliding ribosomes and phosphorylates MAP kinase kinases, leading to activation of the JNK and MAP kinase p38 pathways that promote programmed cell death. Less dangerous levels of ribosome collisions trigger the integrated stress response (ISR): MAP3K20 activates EIF2AK4/GCN2 independently of its protein-kinase activity, promoting EIF2AK4/GCN2-mediated phosphorylation of EIF2S1/eIF-2-alpha. Also part of the stress-activated protein kinase signaling cascade triggering the NLRP1 inflammasome in response to UV-B irradiation: ribosome collisions activate MAP3K20, which directly phosphorylates NLRP1, leading to activation of the NLRP1 inflammasome and subsequent pyroptosis. NLRP1 is also phosphorylated by MAP kinase p38 downstream of MAP3K20. Also acts as a histone kinase by phosphorylating histone H3 at 'Ser-28' (H3S28ph). In terms of biological role, isoform that lacks the C-terminal region that mediates ribosome-binding: does not act as a sensor of ribosome collisions in response to ribotoxic stress. May act as an antagonist of isoform ZAKalpha: interacts with isoform ZAKalpha, leading to decrease the expression of isoform ZAKalpha. This Homo sapiens (Human) protein is Mitogen-activated protein kinase kinase kinase 20.